The chain runs to 153 residues: ATP synthase subunit b' (153 aa).

Residues 23–40 form a helical membrane-spanning segment; that stretch reads LMAIQVVALTYILNSLFF.

It belongs to the ATPase B chain family. In terms of assembly, F-type ATPases have 2 components, F(1) - the catalytic core - and F(0) - the membrane proton channel. F(1) has five subunits: alpha(3), beta(3), gamma(1), delta(1), epsilon(1). F(0) has four main subunits: a(1), b(1), b'(1) and c(10-14). The alpha and beta chains form an alternating ring which encloses part of the gamma chain. F(1) is attached to F(0) by a central stalk formed by the gamma and epsilon chains, while a peripheral stalk is formed by the delta, b and b' chains.

The protein resides in the cellular thylakoid membrane. Its function is as follows. F(1)F(0) ATP synthase produces ATP from ADP in the presence of a proton or sodium gradient. F-type ATPases consist of two structural domains, F(1) containing the extramembraneous catalytic core and F(0) containing the membrane proton channel, linked together by a central stalk and a peripheral stalk. During catalysis, ATP synthesis in the catalytic domain of F(1) is coupled via a rotary mechanism of the central stalk subunits to proton translocation. In terms of biological role, component of the F(0) channel, it forms part of the peripheral stalk, linking F(1) to F(0). The b'-subunit is a diverged and duplicated form of b found in plants and photosynthetic bacteria. In Prochlorococcus marinus (strain MIT 9312), this protein is ATP synthase subunit b'.